Reading from the N-terminus, the 229-residue chain is All-trans retinoic acid-induced differentiation factor (229 aa).

The signal sequence occupies residues 1–30 (MAPHDPGSLTTLVPWAAALLLALGVERALA). At 31–199 (LPEICTQCPG…YKCMRQGSFS (169 aa)) the chain is on the extracellular side. N44, N79, N157, and N168 each carry an N-linked (GlcNAc...) asparagine glycan. Residues 152–193 (QKNLCNNTGDPEMCPENGSCVPDGPGLLQCVCADGFHGYKCM) form the EGF-like domain. Disulfide bonds link C156–C171, C165–C181, and C183–C192. Residues 200–220 (LLMFFGILGATTLSVSILLWA) form a helical membrane-spanning segment. Residues 221–229 (TQRRKAKTS) are Cytoplasmic-facing.

Interacts with NELL1; the interaction promotes osteoblastic differentiation and mineralization. Interacts with SLC37A3; the interaction is direct and both proteins are mutually dependent for their stability. As to expression, weakly expressed in hematopoietic cell lines.

Its subcellular location is the nucleus envelope. The protein localises to the cell membrane. It localises to the lysosome membrane. Functionally, promotes osteoblast cell differentiation and terminal mineralization. Plays a role in inducing the cell cycle arrest via inhibiting CCND1 expression in all-trans-retinoic acid (ATRA) signal pathway. In osteoclasts, forms a transporter complex with ATRAID for nitrogen-containing-bisphophonates (N-BPs) required for releasing N-BP molecules that have trafficked to lysosomes through fluid-phase endocytosis into the cytosol. This chain is All-trans retinoic acid-induced differentiation factor, found in Homo sapiens (Human).